The sequence spans 197 residues: Ribosome maturation factor RimM (197 aa).

Positions 92–164 (DEGWYEHELV…YILVTPPPGL (73 aa)) constitute a PRC barrel domain. The segment at 167-197 (INVEDSGETSDAGESGPGEAEPGKAEAGDNA) is disordered. A compositionally biased stretch (low complexity) spans 176–186 (SDAGESGPGEA). The span at 187–197 (EPGKAEAGDNA) shows a compositional bias: basic and acidic residues.

Belongs to the RimM family. As to quaternary structure, binds ribosomal protein uS19.

It is found in the cytoplasm. Functionally, an accessory protein needed during the final step in the assembly of 30S ribosomal subunit, possibly for assembly of the head region. Essential for efficient processing of 16S rRNA. May be needed both before and after RbfA during the maturation of 16S rRNA. It has affinity for free ribosomal 30S subunits but not for 70S ribosomes. The protein is Ribosome maturation factor RimM of Arthrobacter sp. (strain FB24).